The following is a 193-amino-acid chain: Holliday junction branch migration complex subunit RuvA (193 aa).

The segment at 1 to 64 (MIGRIAGILL…EDANLLYGFL (64 aa)) is domain I. A domain II region spans residues 65 to 139 (TPQERTTFRE…GKLGADLGEL (75 aa)). The tract at residues 139–143 (LAGAA) is flexible linker. Residues 144–193 (SPSDHATDILNALLALGYSEKEGLAAIKNVPAGTGVSEGIKLALKALSKV) form a domain III region.

Belongs to the RuvA family. Homotetramer. Forms an RuvA(8)-RuvB(12)-Holliday junction (HJ) complex. HJ DNA is sandwiched between 2 RuvA tetramers; dsDNA enters through RuvA and exits via RuvB. An RuvB hexamer assembles on each DNA strand where it exits the tetramer. Each RuvB hexamer is contacted by two RuvA subunits (via domain III) on 2 adjacent RuvB subunits; this complex drives branch migration. In the full resolvosome a probable DNA-RuvA(4)-RuvB(12)-RuvC(2) complex forms which resolves the HJ.

Its subcellular location is the cytoplasm. In terms of biological role, the RuvA-RuvB-RuvC complex processes Holliday junction (HJ) DNA during genetic recombination and DNA repair, while the RuvA-RuvB complex plays an important role in the rescue of blocked DNA replication forks via replication fork reversal (RFR). RuvA specifically binds to HJ cruciform DNA, conferring on it an open structure. The RuvB hexamer acts as an ATP-dependent pump, pulling dsDNA into and through the RuvAB complex. HJ branch migration allows RuvC to scan DNA until it finds its consensus sequence, where it cleaves and resolves the cruciform DNA. This chain is Holliday junction branch migration complex subunit RuvA, found in Burkholderia lata (strain ATCC 17760 / DSM 23089 / LMG 22485 / NCIMB 9086 / R18194 / 383).